The primary structure comprises 151 residues: Large ribosomal subunit protein uL15 (151 aa).

A disordered region spans residues 1–57 (MTLRLDSLKANKGARRRKLRKGRGIAAGQGASCGFGMRGQKSRSGRPTRPGFEGGQM). Over residues 12-23 (KGARRRKLRKGR) the composition is skewed to basic residues. The segment covering 25–37 (IAAGQGASCGFGM) has biased composition (gly residues).

This sequence belongs to the universal ribosomal protein uL15 family. In terms of assembly, part of the 50S ribosomal subunit.

Binds to the 23S rRNA. The chain is Large ribosomal subunit protein uL15 from Synechococcus sp. (strain CC9902).